Consider the following 295-residue polypeptide: Protoheme IX farnesyltransferase 2 (295 aa).

The next 9 membrane-spanning stretches (helical) occupy residues 9–29 (ITKP…FFLA), 36–56 (FALF…GCVF), 83–103 (LPLA…LLYV), 108–128 (LSAF…SLWL), 135–155 (GTLV…CAVS), 163–183 (VTLL…IAIF), 209–229 (IVLY…GGYA), 230–250 (GLGY…MAWG), and 264–284 (VFGF…VDSQ).

It belongs to the UbiA prenyltransferase family. Protoheme IX farnesyltransferase subfamily.

It localises to the cell inner membrane. The enzyme catalyses heme b + (2E,6E)-farnesyl diphosphate + H2O = Fe(II)-heme o + diphosphate. It functions in the pathway porphyrin-containing compound metabolism; heme O biosynthesis; heme O from protoheme: step 1/1. Its function is as follows. Converts heme B (protoheme IX) to heme O by substitution of the vinyl group on carbon 2 of heme B porphyrin ring with a hydroxyethyl farnesyl side group. The chain is Protoheme IX farnesyltransferase 2 from Pseudomonas putida (strain GB-1).